Consider the following 485-residue polypeptide: MFS-type transporter phm3 (485 aa).

The segment at 1–22 is disordered; sequence MSLQDPTKEHNNTSPSPKDEKT. 12 helical membrane-spanning segments follow: residues 55 to 75, 83 to 103, 113 to 133, 144 to 164, 175 to 195, 203 to 223, 278 to 298, 317 to 337, 357 to 377, 384 to 404, 421 to 441, and 449 to 469; these read FTLY…LLVA, IVAS…PFLL, LWLY…CALS, FICG…IADL, ALFG…GGFV, WTFY…AVIM, PIVL…YLLF, GLAF…FAIL, LVLM…YGWS, WIVP…ILMP, ALAV…LAGP, and LGWG…VPFV.

Belongs to the major facilitator superfamily.

Its subcellular location is the cell membrane. MFS-type transporter; part of the gene cluster that mediates the biosynthesis of the trans-fused decalin-containing tetramic acid phomasetin. The sequence is that of MFS-type transporter phm3 from Pyrenochaetopsis sp.